A 249-amino-acid polypeptide reads, in one-letter code: Type III pantothenate kinase (249 aa).

6-13 (DCGNSFIK) contributes to the ATP binding site. Substrate-binding positions include tyrosine 93 and 100–103 (GLDR). Aspartate 102 acts as the Proton acceptor in catalysis. Aspartate 122 serves as a coordination point for K(+). Threonine 125 contributes to the ATP binding site. A substrate-binding site is contributed by threonine 181.

It belongs to the type III pantothenate kinase family. Homodimer. NH4(+) is required as a cofactor. The cofactor is K(+).

The protein localises to the cytoplasm. The enzyme catalyses (R)-pantothenate + ATP = (R)-4'-phosphopantothenate + ADP + H(+). It functions in the pathway cofactor biosynthesis; coenzyme A biosynthesis; CoA from (R)-pantothenate: step 1/5. In terms of biological role, catalyzes the phosphorylation of pantothenate (Pan), the first step in CoA biosynthesis. The polypeptide is Type III pantothenate kinase (Pseudomonas fluorescens (strain SBW25)).